A 297-amino-acid chain; its full sequence is Transcription factor bHLH129 (297 aa).

A disordered region spans residues 1–145 (MYPPNSSKST…SSSHQEHNSL (145 aa)). Ser35 bears the Phosphoserine mark. Residues 68–82 (SSIGFDSNASSSSSL) show a composition bias toward low complexity. The span at 111-121 (PNGGYGGGGEQ) shows a compositional bias: gly residues. Ser138 bears the Phosphoserine mark. The 51-residue stretch at 239 to 289 (FATHPRSIAERERRTRISGKLKKLQELVPNMDKQTSYADMLDLAVEHIKGL) folds into the bHLH domain.

In terms of assembly, homodimer.

It is found in the nucleus. The sequence is that of Transcription factor bHLH129 (BHLH129) from Arabidopsis thaliana (Mouse-ear cress).